Reading from the N-terminus, the 158-residue chain is NADPH-dependent 7-cyano-7-deazaguanine reductase (158 aa).

Residues 1-13 are compositionally biased toward polar residues; the sequence is MAKRSNTTMTSAG. A disordered region spans residues 1-37; it reads MAKRSNTTMTSAGLQLGREVAPPDSPETAKLDRVPNP. Positions 27 to 37 are enriched in basic and acidic residues; that stretch reads ETAKLDRVPNP. Cys-56 (thioimide intermediate) is an active-site residue. Asp-63 functions as the Proton donor in the catalytic mechanism. Residues 78 to 80 and 97 to 98 contribute to the substrate site; these read VES and HE.

It belongs to the GTP cyclohydrolase I family. QueF type 1 subfamily.

Its subcellular location is the cytoplasm. It catalyses the reaction 7-aminomethyl-7-carbaguanine + 2 NADP(+) = 7-cyano-7-deazaguanine + 2 NADPH + 3 H(+). It participates in tRNA modification; tRNA-queuosine biosynthesis. Its function is as follows. Catalyzes the NADPH-dependent reduction of 7-cyano-7-deazaguanine (preQ0) to 7-aminomethyl-7-deazaguanine (preQ1). This is NADPH-dependent 7-cyano-7-deazaguanine reductase from Bradyrhizobium sp. (strain ORS 278).